The primary structure comprises 140 residues: Nucleoside diphosphate kinase (140 aa).

ATP-binding residues include Lys-11, Phe-59, Arg-87, Thr-93, Arg-104, and Asn-114. Catalysis depends on His-117, which acts as the Pros-phosphohistidine intermediate.

It belongs to the NDK family. In terms of assembly, homotetramer. It depends on Mg(2+) as a cofactor.

The protein localises to the cytoplasm. The catalysed reaction is a 2'-deoxyribonucleoside 5'-diphosphate + ATP = a 2'-deoxyribonucleoside 5'-triphosphate + ADP. It carries out the reaction a ribonucleoside 5'-diphosphate + ATP = a ribonucleoside 5'-triphosphate + ADP. Its function is as follows. Major role in the synthesis of nucleoside triphosphates other than ATP. The ATP gamma phosphate is transferred to the NDP beta phosphate via a ping-pong mechanism, using a phosphorylated active-site intermediate. This is Nucleoside diphosphate kinase from Nitrobacter hamburgensis (strain DSM 10229 / NCIMB 13809 / X14).